The primary structure comprises 365 residues: Peptide chain release factor 2 (365 aa).

Gln252 carries the N5-methylglutamine modification.

The protein belongs to the prokaryotic/mitochondrial release factor family. Post-translationally, methylated by PrmC. Methylation increases the termination efficiency of RF2.

The protein localises to the cytoplasm. Functionally, peptide chain release factor 2 directs the termination of translation in response to the peptide chain termination codons UGA and UAA. The chain is Peptide chain release factor 2 from Tolumonas auensis (strain DSM 9187 / NBRC 110442 / TA 4).